The following is a 282-amino-acid chain: 4-diphosphocytidyl-2-C-methyl-D-erythritol kinase (282 aa).

The active site involves Lys12. 95-105 (PMGGGIGGGSS) contributes to the ATP binding site. Asp137 is a catalytic residue.

This sequence belongs to the GHMP kinase family. IspE subfamily.

It carries out the reaction 4-CDP-2-C-methyl-D-erythritol + ATP = 4-CDP-2-C-methyl-D-erythritol 2-phosphate + ADP + H(+). Its pathway is isoprenoid biosynthesis; isopentenyl diphosphate biosynthesis via DXP pathway; isopentenyl diphosphate from 1-deoxy-D-xylulose 5-phosphate: step 3/6. Catalyzes the phosphorylation of the position 2 hydroxy group of 4-diphosphocytidyl-2C-methyl-D-erythritol. This is 4-diphosphocytidyl-2-C-methyl-D-erythritol kinase from Pseudomonas aeruginosa (strain UCBPP-PA14).